A 308-amino-acid polypeptide reads, in one-letter code: Glutaminase (308 aa).

Residues S68, N118, E162, N169, Y193, Y244, and V262 each contribute to the substrate site.

Belongs to the glutaminase family. As to quaternary structure, homotetramer.

It carries out the reaction L-glutamine + H2O = L-glutamate + NH4(+). This Hahella chejuensis (strain KCTC 2396) protein is Glutaminase.